Here is a 296-residue protein sequence, read N- to C-terminus: Antisense-enhancing sequence 1 (296 aa).

E47 is a catalytic residue.

Belongs to the PhzF family.

May have isomerase activity. Enhances target gene silencing when coexpressed with antisense RNA. This chain is Antisense-enhancing sequence 1 (aes1), found in Schizosaccharomyces pombe (strain 972 / ATCC 24843) (Fission yeast).